Reading from the N-terminus, the 244-residue chain is Signal recognition particle receptor subunit beta (244 aa).

A helical transmembrane segment spans residues 7 to 23 (IIACLLVIGTTIALIAV). GTP-binding positions include 45–53 (GPQNSGKTS), 66–69 (TVVS), G90, and 154–157 (NKSE).

This sequence belongs to the SRP receptor beta subunit family. As to quaternary structure, heterodimer of an alpha and a beta chain.

It localises to the endoplasmic reticulum membrane. In terms of biological role, component of the signal recognition particle (SRP) complex receptor (SR). Ensures, in conjunction with the SRP complex, the correct targeting of the nascent secretory proteins to the endoplasmic reticulum membrane system. May mediate the membrane association of SR. The sequence is that of Signal recognition particle receptor subunit beta (SRP102) from Saccharomyces cerevisiae (strain ATCC 204508 / S288c) (Baker's yeast).